The following is a 603-amino-acid chain: Elongation factor 4 (603 aa).

The 183-residue stretch at serine 7–arginine 189 folds into the tr-type G domain. GTP contacts are provided by residues aspartate 19 to threonine 24 and asparagine 136 to aspartate 139.

This sequence belongs to the TRAFAC class translation factor GTPase superfamily. Classic translation factor GTPase family. LepA subfamily.

It is found in the cell inner membrane. It carries out the reaction GTP + H2O = GDP + phosphate + H(+). Required for accurate and efficient protein synthesis under certain stress conditions. May act as a fidelity factor of the translation reaction, by catalyzing a one-codon backward translocation of tRNAs on improperly translocated ribosomes. Back-translocation proceeds from a post-translocation (POST) complex to a pre-translocation (PRE) complex, thus giving elongation factor G a second chance to translocate the tRNAs correctly. Binds to ribosomes in a GTP-dependent manner. The sequence is that of Elongation factor 4 from Thermosynechococcus vestitus (strain NIES-2133 / IAM M-273 / BP-1).